Here is a 215-residue protein sequence, read N- to C-terminus: Pre-hexon-linking protein VIII (215 aa).

The residue at position 62 (T62) is a Phosphothreonine; by host. A propeptide spanning residues 110-150 is cleaved from the precursor; that stretch reads AWINYKNGSVRYEAPLQLAEEQVGGPLNAFAIKHQLQLAGG.

It belongs to the adenoviridae hexon-linking protein family. Interacts with the peripentonal hexons as well as the hexons in the facets. Part of a complex composed of the core-capsid bridging protein, the endosome lysis protein VI and the hexon-linking protein VIII; these interactions bridge the virus core to the capsid. In terms of processing, cleaved by the viral protease during virion maturation. May cause the middle segment to be shed from the capsid.

It is found in the virion. The protein resides in the host nucleus. Its function is as follows. Structural component of the virion that acts as a cement protein on the capsid interior and which glue the peripentonal hexons and group-of-nine hexons together. In Murine adenovirus A serotype 1 (MAdV-1), this protein is Pre-hexon-linking protein VIII.